The sequence spans 360 residues: Hereditary hemochromatosis protein homolog (360 aa).

The N-terminal stretch at 1 to 25 is a signal peptide; it reads MDRSAGLPVRLLLLLLLLLLWSVAP. The interval 26–127 is alpha-1; it reads QALRPGSHSL…KVTKLRVVPE (102 aa). At 26-319 the chain is on the extracellular side; sequence QALRPGSHSL…WEPSRSQDMI (294 aa). 4 N-linked (GlcNAc...) asparagine glycosylation sites follow: asparagine 115, asparagine 143, asparagine 167, and asparagine 247. Residues 128–218 form an alpha-2 region; the sequence is SHILQVILGC…ELQRGVLGQQ (91 aa). 2 disulfides stabilise this stretch: cysteine 137/cysteine 200 and cysteine 238/cysteine 295. The tract at residues 219 to 310 is alpha-3; sequence VPTLVKVTRH…GLDQPLTATW (92 aa). One can recognise an Ig-like C1-type domain in the interval 220–309; the sequence is PTLVKVTRHW…PGLDQPLTAT (90 aa). Positions 311 to 319 are connecting peptide; the sequence is EPSRSQDMI. The chain crosses the membrane as a helical span at residues 320-340; that stretch reads IGIISGITICAIFFVGILILV. Topologically, residues 341–360 are cytoplasmic; the sequence is LRKRKVSGGTMGDYVLTECE.

It belongs to the MHC class I family. In terms of assembly, binds TFR through the extracellular domain in a pH-dependent manner.

It localises to the cell membrane. Binds to transferrin receptor (TFR) and reduces its affinity for iron-loaded transferrin. This chain is Hereditary hemochromatosis protein homolog (Hfe), found in Rattus norvegicus (Rat).